The chain runs to 189 residues: Ras-like protein 1 (189 aa).

A GTP-binding site is contributed by 10–17; it reads GAGGVGKS. An Effector region motif is present at residues 32 to 40; the sequence is YDPTIEDSY. Residues 57-61 and 116-119 contribute to the GTP site; these read DTAGQ and NKCD. Cysteine methyl ester is present on Cys186. A lipid anchor (S-geranylgeranyl cysteine) is attached at Cys186. A propeptide spans 187–189 (removed in mature form); the sequence is KML.

Belongs to the small GTPase superfamily. Ras family.

Its subcellular location is the cell membrane. The catalysed reaction is GTP + H2O = GDP + phosphate + H(+). Alternates between an inactive form bound to GDP and an active form bound to GTP. Activated by a guanine nucleotide-exchange factor (GEF) and inactivated by a GTPase-activating protein (GAP). Ras proteins bind GDP/GTP and possess intrinsic GTPase activity. Plays a role in eye development by regulating cell growth, survival of postmitotic ommatidial cells and differentiation of photoreceptor cells. During larval development, mediates Ptth/tor signaling leading to the production of ecdysone, a hormone required for the initiation of metamorphosis. The chain is Ras-like protein 1 from Drosophila virilis (Fruit fly).